The following is a 647-amino-acid chain: Threonine--tRNA ligase (647 aa).

Positions 1–60 constitute a TGS domain; the sequence is MQVTIEDQSLEAAAGEACGQVLSRAVSGKRLKNAVACLVDGQPRDLAFPLPEDAHELALV. Residues 242-533 are catalytic; it reads DHRKLGAQLD…LIEHTAGALP (292 aa). Residues cysteine 334, histidine 385, and histidine 510 each contribute to the Zn(2+) site.

This sequence belongs to the class-II aminoacyl-tRNA synthetase family. As to quaternary structure, homodimer. Zn(2+) is required as a cofactor.

The protein localises to the cytoplasm. It carries out the reaction tRNA(Thr) + L-threonine + ATP = L-threonyl-tRNA(Thr) + AMP + diphosphate + H(+). In terms of biological role, catalyzes the attachment of threonine to tRNA(Thr) in a two-step reaction: L-threonine is first activated by ATP to form Thr-AMP and then transferred to the acceptor end of tRNA(Thr). Also edits incorrectly charged L-seryl-tRNA(Thr). This Solidesulfovibrio magneticus (strain ATCC 700980 / DSM 13731 / RS-1) (Desulfovibrio magneticus) protein is Threonine--tRNA ligase.